A 419-amino-acid polypeptide reads, in one-letter code: F-box/LRR-repeat protein At1g67190 (419 aa).

The 48-residue stretch at 1 to 48 (MDYLPVEVIGNILSRLGGARDVVIASATCRKWREACRKHLQTLSFNSA) folds into the F-box domain. 9 LRR repeats span residues 53-82 (YRDLTTNRLEILITQTIFQTMGLQGLSIMM), 96-124 (WLMYTRDTLRRLSYNVRTTPNVNILEICG), 133-157 (LAHNSITGVEPSFQRFPCLKSLSLS), 158-183 (YVSISALDLNLLLSACPMIESLELVS), 185-209 (EIAMSDAQVTIELSSPTLKSVYFDG), 245-272 (HFKLDDVSVIHLDIMETSESLEVVDVNH), 273-297 (FTMVWPKFYQMISRSQKLKKLRLWD), 301-326 (DDDDEIIDVESIAAGFSHLTHLSLSY), and 356-381 (INDVFSIWVEELLRRCPNLKKLIIYG).

The sequence is that of F-box/LRR-repeat protein At1g67190 from Arabidopsis thaliana (Mouse-ear cress).